The primary structure comprises 229 residues: Large ribosomal subunit protein uL1 (229 aa).

The protein belongs to the universal ribosomal protein uL1 family. Part of the 50S ribosomal subunit.

In terms of biological role, binds directly to 23S rRNA. The L1 stalk is quite mobile in the ribosome, and is involved in E site tRNA release. Protein L1 is also a translational repressor protein, it controls the translation of the L11 operon by binding to its mRNA. The chain is Large ribosomal subunit protein uL1 from Bifidobacterium animalis subsp. lactis (strain AD011).